Consider the following 100-residue polypeptide: Small ribosomal subunit protein uS14c (100 aa).

The protein belongs to the universal ribosomal protein uS14 family. As to quaternary structure, part of the 30S ribosomal subunit.

Its subcellular location is the plastid. The protein resides in the chloroplast. In terms of biological role, binds 16S rRNA, required for the assembly of 30S particles. In Staurastrum punctulatum (Green alga), this protein is Small ribosomal subunit protein uS14c.